Here is a 352-residue protein sequence, read N- to C-terminus: uncharacterized protein (352 aa).

The protein to Synechocystis PCC 6803 slr0039.

This is an uncharacterized protein from Archaeoglobus fulgidus (strain ATCC 49558 / DSM 4304 / JCM 9628 / NBRC 100126 / VC-16).